Reading from the N-terminus, the 775-residue chain is MILDVDYITEEGKPVIRLFKKENGKFKIEHDRTFRPYIYALLRDDSKIEEVKKITGERHGKIVRIVDVEKVEKKFLGKPITVWKLYLEHPQDVPTIREKVREHPAVVDIFEYDIPFAKRYLIDKGLIPMEGEEELKILAFDIETLYHEGEEFGKGPIIMISYADENEAKVITWKNIDLPYVEVVSSEREMIKRFLRIIREKDPDIIVTYNGDSFDFPYLAKRAEKLGIKLTIGRDGSEPKMQRIGDMTAVEVKGRIHFDLYHVITRTINLPTYTLEAVYEAIFGKPKEKVYADEIAKAWESGENLERVAKYSMEDAKATYELGKEFLPMEIQLSRLVGQPLWDVSRSSTGNLVEWFLLRKAYERNEVAPNKPSEEEYQRRLRESYTGGFVKEPEKGLWENIVYLDFRALYPSIIITHNVSPDTLNLEGCKNYDIAPQVGHKFCKDIPGFIPSLLGHLLEERQKIKTKMKETQDPIEKILLDYRQKAIKLLANSFYGYYGYAKARWYCKECAESVTAWGRKYIELVWKELEEKFGFKVLYIDTDGLYATIPGGESEEIKKKALEFVKYINSKLPGLLELEYEGFYKRGFFVTKKRYAVIDEEGKVITRGLEIVRRDWSEIAKETQARVLETILKHGDVEEAVRIVKEVIQKLANYEIPPEKLAIYEQITRPLHEYKAIGPHVAVAKKLAAKGVKIKPGMVIGYIVLRGDGPISNRAILAEEYDPKKHKYDAEYYIENQVLPAVLRILEGFGYRKEDLRYQKTRQVGLTSWLNIKKS.

The protein belongs to the DNA polymerase type-B family. Monomer.

The enzyme catalyses DNA(n) + a 2'-deoxyribonucleoside 5'-triphosphate = DNA(n+1) + diphosphate. With respect to regulation, an 11-mer corresponding to the PIP-box of RfcL inhibits DNA synthesis. Functionally, in addition to polymerase activity, this DNA polymerase exhibits 3' to 5' exonuclease activity. This chain is DNA polymerase (pol), found in Pyrococcus furiosus (strain ATCC 43587 / DSM 3638 / JCM 8422 / Vc1).